A 137-amino-acid chain; its full sequence is uncharacterized protein (137 aa).

The next 2 membrane-spanning stretches (helical) occupy residues 26 to 42 (CSLCILSMAISTSFFAM) and 52 to 69 (ASIPIYPLSLTFLCGSIL).

Its subcellular location is the membrane. This is an uncharacterized protein from Saccharomyces cerevisiae (strain ATCC 204508 / S288c) (Baker's yeast).